Consider the following 253-residue polypeptide: Phosphate import ATP-binding protein PstB 3 (253 aa).

Positions 8–248 constitute an ABC transporter domain; it reads LVINNLDLYY…PQDERTENYI (241 aa). 40–47 serves as a coordination point for ATP; that stretch reads GPSGCGKS.

The protein belongs to the ABC transporter superfamily. Phosphate importer (TC 3.A.1.7) family. In terms of assembly, the complex is composed of two ATP-binding proteins (PstB), two transmembrane proteins (PstC and PstA) and a solute-binding protein (PstS).

It localises to the cell membrane. The enzyme catalyses phosphate(out) + ATP + H2O = ADP + 2 phosphate(in) + H(+). Part of the ABC transporter complex PstSACB involved in phosphate import. Responsible for energy coupling to the transport system. The sequence is that of Phosphate import ATP-binding protein PstB 3 from Streptococcus agalactiae serotype III (strain NEM316).